The primary structure comprises 333 residues: Gap junction alpha-4 protein (333 aa).

Topologically, residues 1-20 (MGDWGFLEKLLDQVQEHSTV) are cytoplasmic. The chain crosses the membrane as a helical span at residues 21 to 40 (VGKIWLTVLFIFRILILGLA). Residues 41–76 (GESVWGDEQSDFECNTAQPGCTNVCYDQAFPISHIR) are Extracellular-facing. The helical transmembrane segment at 77 to 99 (YWVLQFLFVSTPTLVYLGHVIYL) threads the bilayer. Residues 100–148 (SRREERLRQKEGELRALPAKDPQVERALAAVERQMAKISVAEDGRLRIR) lie on the Cytoplasmic side of the membrane. A helical transmembrane segment spans residues 149–165 (GALMGTYVASVLCKSVL). The Extracellular segment spans residues 166–207 (EAGFLYGQWRLYGWTMEPVFVCQRAPCPYLVDCFVSRPTEKT). A helical membrane pass occupies residues 208-230 (IFIIFMLVVGLISLVLNLLELVH). The Cytoplasmic portion of the chain corresponds to 231–333 (LLCRCLSRGM…SSSASKKQYV (103 aa)). Residues 292-333 (ANLTTEERLASSRPPLFLDPPPQNGQKPPSRPSSSASKKQYV) are disordered. Residues 323 to 333 (PSSSASKKQYV) are compositionally biased toward low complexity.

Belongs to the connexin family. Alpha-type (group II) subfamily. A connexon is composed of a hexamer of connexins. As to expression, expressed in multiple organs and tissues, including heart, uterus, ovary, and blood vessel endothelium.

The protein resides in the cell membrane. Its subcellular location is the cell junction. The protein localises to the gap junction. In terms of biological role, one gap junction consists of a cluster of closely packed pairs of transmembrane channels, the connexons, through which materials of low MW diffuse from one cell to a neighboring cell. The chain is Gap junction alpha-4 protein (GJA4) from Homo sapiens (Human).